The chain runs to 154 residues: Oleosin 16.4 kDa (154 aa).

Ala-2 carries the post-translational modification N-acetylalanine. The tract at residues 2 to 33 (ADRDRSYRTFDQVVRGDRTNYQSGPSTTQVLT) is polar. 3 helical membrane passes run 31–51 (VLTVLTLLPIGGTLLALAGLT), 65–85 (LFVIFSPVLVPAAIAVFMAVA), and 86–106 (GFLSSGAFGLTGLSSLSYVFN). The segment at 34-105 (VLTLLPIGGT…TGLSSLSYVF (72 aa)) is hydrophobic.

This sequence belongs to the oleosin family.

The protein resides in the lipid droplet. Its subcellular location is the membrane. Functionally, may have a structural role to stabilize the lipid body during desiccation of the seed by preventing coalescence of the oil. Probably interacts with both lipid and phospholipid moieties of lipid bodies. May also provide recognition signals for specific lipase anchorage in lipolysis during seedling growth. In Gossypium hirsutum (Upland cotton), this protein is Oleosin 16.4 kDa (MATP7).